The primary structure comprises 413 residues: Cell division protein FtsA (413 aa).

The protein belongs to the FtsA/MreB family. As to quaternary structure, self-interacts. Interacts with FtsZ.

The protein localises to the cell inner membrane. Its function is as follows. Cell division protein that is involved in the assembly of the Z ring. May serve as a membrane anchor for the Z ring. In Borreliella burgdorferi (strain ATCC 35210 / DSM 4680 / CIP 102532 / B31) (Borrelia burgdorferi), this protein is Cell division protein FtsA.